Consider the following 264-residue polypeptide: uncharacterized protein (264 aa).

A signal peptide spans 1 to 22 (MIHSKKLTLGICLVLLIILIGG). The N-palmitoyl cysteine moiety is linked to residue Cys-23. Residue Cys-23 is the site of S-diacylglycerol cysteine attachment.

This sequence belongs to the staphylococcal tandem lipoprotein family.

It is found in the cell membrane. This is an uncharacterized protein from Staphylococcus aureus (strain N315).